The sequence spans 419 residues: Histidine--tRNA ligase (419 aa).

Belongs to the class-II aminoacyl-tRNA synthetase family. As to quaternary structure, homodimer.

It is found in the cytoplasm. It catalyses the reaction tRNA(His) + L-histidine + ATP = L-histidyl-tRNA(His) + AMP + diphosphate + H(+). This Trichlorobacter lovleyi (strain ATCC BAA-1151 / DSM 17278 / SZ) (Geobacter lovleyi) protein is Histidine--tRNA ligase.